A 211-amino-acid polypeptide reads, in one-letter code: NADH-quinone oxidoreductase subunit A (211 aa).

3 consecutive transmembrane segments (helical) span residues tryptophan 7–proline 27, phenylalanine 61–tyrosine 81, and valine 88–isoleucine 108.

The protein belongs to the complex I subunit 3 family. In terms of assembly, NDH-1 is composed of 14 different subunits. Subunits NuoA, H, J, K, L, M, N constitute the membrane sector of the complex.

The protein localises to the cell inner membrane. It carries out the reaction a quinone + NADH + 5 H(+)(in) = a quinol + NAD(+) + 4 H(+)(out). NDH-1 shuttles electrons from NADH, via FMN and iron-sulfur (Fe-S) centers, to quinones in the respiratory chain. The immediate electron acceptor for the enzyme in this species is believed to be ubiquinone. Couples the redox reaction to proton translocation (for every two electrons transferred, four hydrogen ions are translocated across the cytoplasmic membrane), and thus conserves the redox energy in a proton gradient. The polypeptide is NADH-quinone oxidoreductase subunit A (Psychrobacter sp. (strain PRwf-1)).